A 799-amino-acid chain; its full sequence is ATP synthase subunit alpha (799 aa).

The interval M1–E549 is ATP synthase alpha chain. Residue G170 to T177 participates in ATP binding. Residues T550–K799 form a unknown region.

This sequence belongs to the ATPase alpha/beta chains family. As to quaternary structure, F-type ATPases have 2 components, CF(1) - the catalytic core - and CF(0) - the membrane proton channel. CF(1) has five subunits: alpha(3), beta(3), gamma(1), delta(1), epsilon(1). CF(0) has three main subunits: a(1), b(2) and c(9-12). The alpha and beta chains form an alternating ring which encloses part of the gamma chain. CF(1) is attached to CF(0) by a central stalk formed by the gamma and epsilon chains, while a peripheral stalk is formed by the delta and b chains.

Its subcellular location is the cell membrane. The catalysed reaction is ATP + H2O + 4 H(+)(in) = ADP + phosphate + 5 H(+)(out). Produces ATP from ADP in the presence of a proton gradient across the membrane. The alpha chain is a regulatory subunit. The chain is ATP synthase subunit alpha (atpA) from Ureaplasma parvum serovar 3 (strain ATCC 27815 / 27 / NCTC 11736).